Consider the following 442-residue polypeptide: Cytochrome c biogenesis CcmF C-terminal-like mitochondrial protein (442 aa).

Transmembrane regions (helical) follow at residues 6 to 26, 39 to 59, and 122 to 142; these read NFFF…PVLL, PFFN…LVYL, and YLES…FFLA. The tract at residues 151–175 is disordered; it reads RARRRKGQTLRPNGNEQRRNDKMRC. A compositionally biased stretch (basic and acidic residues) spans 166–175; that stretch reads EQRRNDKMRC. A helical transmembrane segment spans residues 411–431; that stretch reads FIFFIWIGFMLASLGGLPSLL.

It belongs to the CcmF/CycK/Ccl1/NrfE/CcsA family. In terms of assembly, interacts with CCMFN2.

The protein resides in the mitochondrion inner membrane. In terms of biological role, forms a complex with CCMFN1, CCMFN2 and CCMH that performs the assembly of heme with c-type apocytochromes in mitochondria. The chain is Cytochrome c biogenesis CcmF C-terminal-like mitochondrial protein (CCMFC) from Arabidopsis thaliana (Mouse-ear cress).